Here is a 123-residue protein sequence, read N- to C-terminus: Ribosome-binding factor A (123 aa).

This sequence belongs to the RbfA family. As to quaternary structure, monomer. Binds 30S ribosomal subunits, but not 50S ribosomal subunits or 70S ribosomes.

It localises to the cytoplasm. In terms of biological role, one of several proteins that assist in the late maturation steps of the functional core of the 30S ribosomal subunit. Associates with free 30S ribosomal subunits (but not with 30S subunits that are part of 70S ribosomes or polysomes). Required for efficient processing of 16S rRNA. May interact with the 5'-terminal helix region of 16S rRNA. This Chlamydia trachomatis serovar A (strain ATCC VR-571B / DSM 19440 / HAR-13) protein is Ribosome-binding factor A.